Reading from the N-terminus, the 303-residue chain is MYYGFDIGGTKIALGVFDSGRQLQWEKRVPTPRDSYDAFLDAVCELVAEADQRFGCKGSVGIGIPGMPETEDGTLYAANVPAASGQPLRADLSARLDRDVRLDNDANCFALSEAWDDEFTQYPLVMGLILGTGVGGGLIFNGKPITGKSYITGEFGHMRLPVDALTMMGLDFPLRRCGCGQHGCIENYLSGRGFAWLYQHYYHQPLQAPEIIALYDQGDEQARAHVERYLDLLAVCLGNILTIVDPDLVVIGGGLSNFPAITTQLADRLPRHLLPVARVPRIERARHGDAGGMRGAAFLHLTD.

ATP is bound by residues 4–11 and 133–140; these read GFDIGGTK and GVGGGLIF. Zn(2+)-binding residues include His-157, Cys-177, Cys-179, and Cys-184.

It belongs to the ROK (NagC/XylR) family. NagK subfamily.

It carries out the reaction N-acetyl-D-glucosamine + ATP = N-acetyl-D-glucosamine 6-phosphate + ADP + H(+). It participates in cell wall biogenesis; peptidoglycan recycling. Catalyzes the phosphorylation of N-acetyl-D-glucosamine (GlcNAc) derived from cell-wall degradation, yielding GlcNAc-6-P. This chain is N-acetyl-D-glucosamine kinase, found in Escherichia coli O139:H28 (strain E24377A / ETEC).